The sequence spans 67 residues: Large ribosomal subunit protein bL35 (67 aa).

Positions 22 to 45 (GKIKRWKSGGAHYNTKKSSKRKRH) are disordered. Over residues 35-45 (NTKKSSKRKRH) the composition is skewed to basic residues.

This sequence belongs to the bacterial ribosomal protein bL35 family.

This chain is Large ribosomal subunit protein bL35, found in Aquifex aeolicus (strain VF5).